Reading from the N-terminus, the 57-residue chain is uncharacterized protein (57 aa).

This is an uncharacterized protein from Methanocaldococcus jannaschii (strain ATCC 43067 / DSM 2661 / JAL-1 / JCM 10045 / NBRC 100440) (Methanococcus jannaschii).